Consider the following 223-residue polypeptide: Adenine phosphoribosyltransferase (223 aa).

Belongs to the purine/pyrimidine phosphoribosyltransferase family. Homodimer.

It localises to the cytoplasm. The catalysed reaction is AMP + diphosphate = 5-phospho-alpha-D-ribose 1-diphosphate + adenine. Its pathway is purine metabolism; AMP biosynthesis via salvage pathway; AMP from adenine: step 1/1. In terms of biological role, catalyzes a salvage reaction resulting in the formation of AMP, that is energically less costly than de novo synthesis. The sequence is that of Adenine phosphoribosyltransferase from Mycobacterium bovis (strain ATCC BAA-935 / AF2122/97).